A 251-amino-acid polypeptide reads, in one-letter code: Large ribosomal subunit protein uL3 (251 aa).

Disordered stretches follow at residues 140-162 and 229-251; these read SHRS…NKKM and AAPA…EENA. An N5-methylglutamine modification is found at Gln-151.

The protein belongs to the universal ribosomal protein uL3 family. Part of the 50S ribosomal subunit. Forms a cluster with proteins L14 and L19. In terms of processing, methylated by PrmB.

Its function is as follows. One of the primary rRNA binding proteins, it binds directly near the 3'-end of the 23S rRNA, where it nucleates assembly of the 50S subunit. This Methylobacterium nodulans (strain LMG 21967 / CNCM I-2342 / ORS 2060) protein is Large ribosomal subunit protein uL3.